A 253-amino-acid chain; its full sequence is Small ribosomal subunit protein eS4 (253 aa).

The 72-residue stretch at 43-114 (LPLLLIVRNV…YPVKFFKLHP (72 aa)) folds into the S4 RNA-binding domain.

The protein belongs to the eukaryotic ribosomal protein eS4 family.

The protein is Small ribosomal subunit protein eS4 (rps4e) of Aeropyrum pernix (strain ATCC 700893 / DSM 11879 / JCM 9820 / NBRC 100138 / K1).